We begin with the raw amino-acid sequence, 1355 residues long: Transcription factor MAR1 (1355 aa).

The segment at residues 23 to 52 (CTICRKRKVKCDKTRPHCNQCTKTGVAHLC) is a DNA-binding region (zn(2)-C6 fungal-type). Disordered regions lie at residues 586-614 (TTDN…KDTN), 918-942 (SVPS…LNQD), and 1221-1253 (PPIS…TSSL). A compositionally biased stretch (low complexity) spans 589–603 (NTRSGPPSNSNRNGS). The span at 604 to 614 (ETPSVSPKDTN) shows a compositional bias: polar residues. Residues 918–927 (SVPSSCNSSS) show a composition bias toward low complexity. Polar residues predominate over residues 1225-1238 (SAKNNMAWGTTPES).

The protein localises to the nucleus. Functionally, transcription factor that contributes to plasma membrane sphingolipid incorporation and membrane permeability, decreasing fluconazole accumulation. Regulates 337 genes under fluconazole stress, including several related to lipid biosynthesis pathways such as RSB1, encoding a sphingoid long-chain base efflux transporter. Associates with the promoter of RSB1 in the region containing two 5'-CCCCTCC-3' motifs and increases its promoter occupancy upon fluconazole stress. The chain is Transcription factor MAR1 from Candida glabrata (strain ATCC 2001 / BCRC 20586 / JCM 3761 / NBRC 0622 / NRRL Y-65 / CBS 138) (Yeast).